The sequence spans 211 residues: MLTIALSKGRILDDTLPLLAEAGIVPTENPDKSRKLIIPTTQADVRLLIVRATDVPTYVEHGAADLGVAGKDVLMEYTGQGLYEPLDLQIAKCKLMTAGAIGAVEPKGRLRVATKFVNVAKRYYAEQGRQVDIIKLYGSMELAPLIGLADKIIDVVDTGNTLRANGLEPQELIATISSRLVVNKASMKMQHARIQALIDTLRKAVESRHRS.

It belongs to the ATP phosphoribosyltransferase family. Short subfamily. Heteromultimer composed of HisG and HisZ subunits.

The protein localises to the cytoplasm. The enzyme catalyses 1-(5-phospho-beta-D-ribosyl)-ATP + diphosphate = 5-phospho-alpha-D-ribose 1-diphosphate + ATP. It participates in amino-acid biosynthesis; L-histidine biosynthesis; L-histidine from 5-phospho-alpha-D-ribose 1-diphosphate: step 1/9. In terms of biological role, catalyzes the condensation of ATP and 5-phosphoribose 1-diphosphate to form N'-(5'-phosphoribosyl)-ATP (PR-ATP). Has a crucial role in the pathway because the rate of histidine biosynthesis seems to be controlled primarily by regulation of HisG enzymatic activity. The chain is ATP phosphoribosyltransferase from Pseudomonas savastanoi pv. phaseolicola (strain 1448A / Race 6) (Pseudomonas syringae pv. phaseolicola (strain 1448A / Race 6)).